Consider the following 359-residue polypeptide: GDSL esterase/lipase At2g30310 (359 aa).

The N-terminal stretch at 1 to 28 (MSTSKTIVFGLFVATLLVSCNVAANATT) is a signal peptide. The active-site Nucleophile is the Ser-41. 2 N-linked (GlcNAc...) asparagine glycosylation sites follow: Asn-103 and Asn-325. Active-site residues include Asp-333 and His-336.

Belongs to the 'GDSL' lipolytic enzyme family.

It localises to the secreted. The chain is GDSL esterase/lipase At2g30310 from Arabidopsis thaliana (Mouse-ear cress).